The chain runs to 541 residues: Protein panoramix (541 aa).

Positions 1 to 169 are interaction with Piwi; that stretch reads MEAPMKLEVK…TLVPDEQQSF (169 aa). 2 disordered regions span residues 52-75 and 198-281; these read SDPE…LQPS and TAEN…TELD. Positions 194-216 form a coiled coil; it reads MLEMTAENRKVKHKKKKHKKERS. The segment covering 203–220 has biased composition (basic residues); the sequence is KVKHKKKKHKKERSHRSN. Composition is skewed to basic and acidic residues over residues 241–251 and 269–279; these read DDKNQFDCDYR and SSKERKLRDTE. Positions 315 to 343 are nxf2-interacting region (NIR); that stretch reads LSKADKRSLAVARAELVLEQIQQKANKEE. Residues 323 to 343 are a coiled coil; sequence LAVARAELVLEQIQQKANKEE. The segment at 387–446 is necessary for interaction with nxf2 and protein stability; the sequence is TPGTRIDLSKWGLETVPEATKRLLRLLGIDVARLKELQSTVKPSQRILKLKKEQLEQGLA.

As to quaternary structure, in the ovaries, part of a complex composed of at least Panx, nxf2, piwi and Nxt1. The complex is knowns as Panx-induced cotranscriptional silencing (PICTS) complex, Panx-nxf2-dependent TAP/p15 silencing (Pandas complex), SFiNX (silencing factor interacting nuclear export variant) or piwi-Panx-nxf2-p15 (PPNP) complex. Interacts (via NIR region) with nxf2 (via TAP-C domain); the interaction is direct. Expressed in female gonads (at protein level).

It localises to the nucleus. Functionally, acts via the piwi-interacting RNA (piRNA) pathway which mediates the repression of transposable elements during meiosis by forming complexes composed of piRNAs and piwi proteins and governs the methylation and subsequent repression of transposons. Required for transcriptional silencing of transposons targeted by piwi and confers its effects by interacting with nascent RNA transcripts. Likely to be recruited to nascent transcripts cotranscriptionally by piwi and to recruit additional factors involved in transcriptional silencing. In the ovaries, forms a complex with nxf2, piwi and Nxt1 which acts as effectors of cotranscriptional transposon silencing. The interaction with nxf2 stabilizes the nuclear protein complex. The chain is Protein panoramix from Drosophila melanogaster (Fruit fly).